We begin with the raw amino-acid sequence, 340 residues long: Replication factor C subunit 3 (340 aa).

Residue serine 2 is modified to N-acetylserine. ATP contacts are provided by residues valine 16 to tyrosine 19, arginine 20, tyrosine 28, glycine 53 to serine 61, asparagine 148, and arginine 206.

The protein belongs to the activator 1 small subunits family. As to quaternary structure, replication factor C (RFC) is a heteropentamer of subunits RFC1, RFC2, RFC3, RFC4 and RFC5 and forms a complex with POL30/PCNA in the presence of ATP. Component of the RAD24-RFC complex which consists of RAD14, RFC2, RFC3, RFC4 and RFC5 and associates with the checkpoint clamp DDC1:MEC3:RAD17 complex. Component of the ELG1-RFC complex which consists of ELG1, RFC2, RFC3, RFC4 and RFC5. Component of the CTF18-RFC complex, which consists of CTF18, CTF8, DCC1, RFC2, RFC3, RFC4 and RFC5. RFC3 interacts with ECO1 and POL30/PCNA.

It localises to the nucleus. Functionally, component of ATP-dependent clamp loader (RFC and RFC-like) complexes for DNA clamps, such as the POL30/PCNA homotrimer and the checkpoint clamp DDC1:MEC3:RAD17 complex. During a clamp loading circle, the RFC:clamp complex binds to DNA and the recognition of the double-stranded/single-stranded junction stimulates ATP hydrolysis by RFC. The complex presumably provides bipartite ATP sites in which one subunit supplies a catalytic site for hydrolysis of ATP bound to the neighboring subunit. Dissociation of RFC from the clamp leaves the clamp encircling DNA. Component of the replication factor C (RFC or activator 1) complex which loads POL30/PCNA and acts during elongation of primed DNA templates by DNA polymerase delta and epsilon. RFC has an essential but redundant activity in sister chromatid cohesion establishment. Component of the RFC-like complex CTF18-RFC which is required for efficient establishment of chromosome cohesion during S-phase and may load or unload POL30/PCNA. Component of the RFC-like RAD24-RFC complex which loads the checkpoint clamp DDC1:MEC3:RAD17 complex and is involved in DNA repair pathways. Component of the RFC-like ELG1-RFC complex which appears to have a role in DNA replication, replication fork re-start, recombination and repair. RFC3 supplies a catalytic site to the ATP site of RFC4. The polypeptide is Replication factor C subunit 3 (RFC3) (Saccharomyces cerevisiae (strain ATCC 204508 / S288c) (Baker's yeast)).